The following is an 834-amino-acid chain: Pentatricopeptide repeat-containing protein At4g39530 (834 aa).

PPR repeat units follow at residues 78 to 112 (DTYLSNILINLYSRAGGMVYARKVFEKMPERNLVS), 113 to 144 (WSTMVSACNHHGIYEESLVVFLEFWRTRKDSP), 145 to 181 (NEYILSSFIQACSGLDGRGRWMVFQLQSFLVKSGFDR), 182 to 212 (DVYVGTLLIDFYLKDGNIDYARLVFDALPEK), 213 to 247 (STVTWTTMISGCVKMGRSYVSLQLFYQLMEDNVVP), 248 to 282 (DGYILSTVLSACSILPFLEGGKQIHAHILRYGLEM), 283 to 313 (DASLMNVLIDSYVKCGRVIAAHKLFNGMPNK), 314 to 348 (NIISWTTLLSGYKQNALHKEAMELFTSMSKFGLKP), 349 to 383 (DMYACSSILTSCASLHALGFGTQVHAYTIKANLGN), 384 to 414 (DSYVTNSLIDMYAKCDCLTDARKVFDIFAAA), 415 to 452 (DVVLFNAMIEGYSRLGTQWELHEALNIFRDMRFRLIRP), 453 to 487 (SLLTFVSLLRASASLTSLGLSKQIHGLMFKYGLNL), 488 to 518 (DIFAGSALIDVYSNCYCLKDSRLVFDEMKVK), 519 to 553 (DLVIWNSMFAGYVQQSENEEALNLFLELQLSRERP), 554 to 588 (DEFTFANMVTAAGNLASVQLGQEFHCQLLKRGLEC), 589 to 619 (NPYITNALLDMYAKCGSPEDAHKAFDSAASR), 620 to 654 (DVVCWNSVISSYANHGEGKKALQMLEKMMSEGIEP), 655 to 689 (NYITFVGVLSACSHAGLVEDGLKQFELMLRFGIEP), and 690 to 720 (ETEHYVCMVSLLGRAGRLNKARELIEKMPTK). The tract at residues 725–800 (VWRSLLSGCA…EPGRSWIGIN (76 aa)) is type E motif. The segment at 801–831 (KEVHIFLSKDKSHCKANQIYEVLDDLLVQIR) is type E(+) motif.

The protein belongs to the PPR family. PCMP-E subfamily.

In Arabidopsis thaliana (Mouse-ear cress), this protein is Pentatricopeptide repeat-containing protein At4g39530 (PCMP-E52).